Consider the following 717-residue polypeptide: MTVEDNLDIDFSDLEEKYAVNADEGFESFIVVDGAPVIPQAKQAALANVMKKFFGAVGKIKEDGIFIPFDEATGKSTGFVFIEYETGEMAAAAVKSFHNKQFDKNHKLLVNKLSEVEKYGMQYDTLKTEEFVEPETEPFVEQGHLRSWLMDPQGRDQFVLHRGDTVGVFWNKKGDTLEADVDRERWTETQVYWSPTGTYLVSTHTQGVQLWGGPDWAPPICKFQHPNVKMVQFSPCEKFLVTWSNVPLVLPDDEEKRKSIPFGPADEGKQIIVWNLETRLPVRTFAMPPEKKGASMSWPILKFSPDDKYAARMIPGEQLSIYETETMSLLDKKSVKAPGIVDFEWAPALVNLEGRQKSATESVLCYWTPEIGNQTARVVLMKASNKEVLRTRNLFNVADCKIHWQDQGRFLCVKVDRHTKSKKSTFTNLEFFRLCERGVPVEVMELKDTVTNMAWEPHGDRFVTISNSDSTTNYDGPLPANRHTLSFYALERHKGTQGTWKLIKAFDKKNCNSLFWSPNGRFLITVMIEGSNSIDLDFWDMDYEGDRKHGDKDLPANLHFLGSSEHYGISALEWDPSGRFVATWSSYWRHHTENGYKIWDFRGQLQREESIDRFKHFSWRPRPPTLLSKQQKKDIRNNLEEYSRKFEEIDAMEASEASRELIMLRKRLLEEWTAWRAQTDKKLEELGLVEPEPAESEYTTIEEIKEVVVEDKEEVCE.

The tract at residues 1-89 is sufficient for interaction with HCR1 and TIF32; sequence MTVEDNLDID…VFIEYETGEM (89 aa). The interval 1–216 is sufficient for interaction with PIC8; that stretch reads MTVEDNLDID…GVQLWGGPDW (216 aa). Residues 28–115 enclose the RRM domain; the sequence is SFIVVDGAPV…HKLLVNKLSE (88 aa). 6 WD repeats span residues 183-221, 223-284, 293-332, 445-484, 506-549, and 564-609; these read RERWTETQVYWSPTGTYLVSTHTQGVQLWGGPDWAPPIC, FQHP…PVRT, GASMSWPILKFSPDDKYAARMIPGEQLSIYETETMSLLDK, ELKDTVTNMAWEPHGDRFVTISNSDSTTNYDGPLPANRHT, FDKK…DRKH, and SEHY…QREE.

This sequence belongs to the eIF-3 subunit B family. As to quaternary structure, component of the eukaryotic translation initiation factor 3 (eIF-3) complex.

It localises to the cytoplasm. In terms of biological role, RNA-binding component of the eukaryotic translation initiation factor 3 (eIF-3) complex, which is involved in protein synthesis of a specialized repertoire of mRNAs and, together with other initiation factors, stimulates binding of mRNA and methionyl-tRNAi to the 40S ribosome. The eIF-3 complex specifically targets and initiates translation of a subset of mRNAs involved in cell proliferation. The chain is Eukaryotic translation initiation factor 3 subunit B from Yarrowia lipolytica (strain CLIB 122 / E 150) (Yeast).